The chain runs to 231 residues: Regulatory protein VanR (231 aa).

One can recognise a Response regulatory domain in the interval 4–117 (KILIVDDEHE…ELIARVKAQL (114 aa)). At aspartate 53 the chain carries 4-aspartylphosphate. The ompR/PhoB-type DNA-binding region spans 131–231 (ENVIVHSGLV…VWGVGYKIEK (101 aa)).

In terms of assembly, monomer. In terms of processing, phosphorylated by VanS. Dephosphorylated by VanS. Can be phosphorylated nonenzymatically by acetyl-phosphate.

The protein localises to the cytoplasm. Member of the two-component regulatory system VanS/VanR. Binds to the promoter regions of target genes, including vanH and vanR; phosphorylation of VanR increases binding affinity to the vanH and vanR promoters significantly. DNA binding may be inhibited by the cognate sensor protein, VanS. Activates the transcription of vanH, vanA and vanX in response to vancomycin which results in vancomycin resistance. Involved in conferring vancomycin resistance. The protein is Regulatory protein VanR (vanR) of Enterococcus faecium (Streptococcus faecium).